Consider the following 285-residue polypeptide: ATP synthase gamma chain (285 aa).

It belongs to the ATPase gamma chain family. As to quaternary structure, F-type ATPases have 2 components, CF(1) - the catalytic core - and CF(0) - the membrane proton channel. CF(1) has five subunits: alpha(3), beta(3), gamma(1), delta(1), epsilon(1). CF(0) has three main subunits: a, b and c.

It localises to the cell membrane. In terms of biological role, produces ATP from ADP in the presence of a proton gradient across the membrane. The gamma chain is believed to be important in regulating ATPase activity and the flow of protons through the CF(0) complex. In Dehalococcoides mccartyi (strain ATCC BAA-2100 / JCM 16839 / KCTC 5957 / BAV1), this protein is ATP synthase gamma chain.